Consider the following 453-residue polypeptide: Growth/differentiation factor 9 (453 aa).

Residues 1–25 (MALPNKFFLWFCCFAWLCFPISLDS) form the signal peptide. Positions 26-318 (QPSRGEAQIV…EGVRLSRHRR (293 aa)) are excised as a propeptide. N-linked (GlcNAc...) asparagine glycosylation is found at Asn-106, Asn-163, Asn-236, Asn-255, and Asn-269. A disordered region spans residues 281–300 (SLHPKRKPSQDPDQKRGLSA). Asn-337 is a glycosylation site (N-linked (GlcNAc...) asparagine). 3 cysteine pairs are disulfide-bonded: Cys-352-Cys-418, Cys-381-Cys-450, and Cys-385-Cys-452.

It belongs to the TGF-beta family. As to quaternary structure, homodimer or heterodimer (Potential). But, in contrast to other members of this family, cannot be disulfide-linked. Post-translationally, phosphorylated; phosphorylation is critical for GDF9 function.

The protein resides in the secreted. Required for ovarian folliculogenesis. In Bos taurus (Bovine), this protein is Growth/differentiation factor 9 (GDF9).